The following is a 164-amino-acid chain: UPF0114 protein Avin_40830 (164 aa).

4 helical membrane passes run Leu-15–Phe-35, Leu-53–Val-73, Gly-103–Phe-125, and Leu-136–Leu-156.

It belongs to the UPF0114 family.

The protein localises to the cell membrane. The protein is UPF0114 protein Avin_40830 of Azotobacter vinelandii (strain DJ / ATCC BAA-1303).